We begin with the raw amino-acid sequence, 418 residues long: MSLLAIGINHNTASVDLREKVAFGPDKLGPALEQLREHEAVNGSVIVSTCNRTELYCDVKQGARNKLIDWLAQFHQVSREDLMPSLYVHEEQAAIKHLMRVSCGLDSLVLGEPQILGQVKQAFSDSRDHQAVDSSIDKLFQKTFSVAKRVRTETDIGGNAVSVAYAACTLAKHIFESLSDSTVLLVGAGETIELVAKHLASNGCTKMIVANRTKERAQGLAEQFGAEVISLNEIPDYLARADIVISSTASPLPIIGKGMVETALKQRRHQPILLVDIAVPRDVEAQVGELNDAYLYSVDDLQSIIDSNIEQRKVEAIQAEAIVSEESASFMTWLRSLQAVDSIRDYRKSANEIREELLSKSLQSLAAGADPEKVLRELSNKLTNKLIHAPTRALQSAAEQGEPAKLTIIRQTLGLDDL.

Substrate is bound by residues 49–52 (TCNR), Ser107, 112–114 (EPQ), and Gln118. Cys50 serves as the catalytic Nucleophile. 187–192 (GAGETI) contacts NADP(+).

This sequence belongs to the glutamyl-tRNA reductase family. In terms of assembly, homodimer.

It catalyses the reaction (S)-4-amino-5-oxopentanoate + tRNA(Glu) + NADP(+) = L-glutamyl-tRNA(Glu) + NADPH + H(+). The protein operates within porphyrin-containing compound metabolism; protoporphyrin-IX biosynthesis; 5-aminolevulinate from L-glutamyl-tRNA(Glu): step 1/2. Catalyzes the NADPH-dependent reduction of glutamyl-tRNA(Glu) to glutamate 1-semialdehyde (GSA). The chain is Glutamyl-tRNA reductase from Vibrio parahaemolyticus serotype O3:K6 (strain RIMD 2210633).